The following is a 223-amino-acid chain: Ubiquitin carboxyl-terminal hydrolase isozyme L1 (223 aa).

At Met-1 the chain carries N-acetylmethionine. The 220-residue stretch at 2–221 (QLKPMEINPE…VRFSAVALCK (220 aa)) folds into the UCH catalytic domain. Residues 5–10 (PMEINP) form an interaction with ubiquitin region. Residue Cys-90 is the Nucleophile of the active site. Ser-125 is modified (phosphoserine). The active-site Proton donor is the His-161. Residues 211–216 (EVRFSA) are interaction with ubiquitin. Cys-220 carries the S-farnesyl cysteine lipid modification. Residues 221–223 (KAA) constitute a propeptide, removed in mature form.

Belongs to the peptidase C12 family. As to quaternary structure, monomer. Homodimer. Interacts with COPS5 and SNCA. Post-translationally, O-glycosylated. In terms of tissue distribution, expressed in the placenta at all stages of pregnancy. Expression increases as pregnancy progresses.

The protein localises to the cytoplasm. It localises to the endoplasmic reticulum membrane. Its subcellular location is the nucleus. The enzyme catalyses Thiol-dependent hydrolysis of ester, thioester, amide, peptide and isopeptide bonds formed by the C-terminal Gly of ubiquitin (a 76-residue protein attached to proteins as an intracellular targeting signal).. In terms of biological role, ubiquitin-protein hydrolase involved both in the processing of ubiquitin precursors and of ubiquitinated proteins. This enzyme is a thiol protease that recognizes and hydrolyzes a peptide bond at the C-terminal glycine of ubiquitin. Also binds to free monoubiquitin and may prevent its degradation in lysosomes. The homodimer may have ATP-independent ubiquitin ligase activity. The chain is Ubiquitin carboxyl-terminal hydrolase isozyme L1 (UCHL1) from Macaca fascicularis (Crab-eating macaque).